The primary structure comprises 200 residues: Protein-methionine-sulfoxide reductase heme-binding subunit MsrQ (200 aa).

5 helical membrane passes run 8-28 (ITWLKVALHLAAFLPLVWLFY), 54-74 (LLLATLLVTPLTRLLKQPLLI), 79-99 (LLGLWCFAWATLHLVSYSLLE), 116-136 (PYLTLGIVSWLILLALALTSF), and 153-173 (FIYLVAILAPIHYLWSVKILS).

The protein belongs to the MsrQ family. As to quaternary structure, heterodimer of a catalytic subunit (MsrP) and a heme-binding subunit (MsrQ). It depends on FMN as a cofactor. Heme b serves as cofactor.

Its subcellular location is the cell inner membrane. In terms of biological role, part of the MsrPQ system that repairs oxidized periplasmic proteins containing methionine sulfoxide residues (Met-O), using respiratory chain electrons. Thus protects these proteins from oxidative-stress damage caused by reactive species of oxygen and chlorine generated by the host defense mechanisms. MsrPQ is essential for the maintenance of envelope integrity under bleach stress, rescuing a wide series of structurally unrelated periplasmic proteins from methionine oxidation. MsrQ provides electrons for reduction to the reductase catalytic subunit MsrP, using the quinone pool of the respiratory chain. The sequence is that of Protein-methionine-sulfoxide reductase heme-binding subunit MsrQ from Cronobacter sakazakii (strain ATCC BAA-894) (Enterobacter sakazakii).